The sequence spans 144 residues: Large ribosomal subunit protein uL11 (144 aa).

Belongs to the universal ribosomal protein uL11 family. As to quaternary structure, part of the ribosomal stalk of the 50S ribosomal subunit. Interacts with L10 and the large rRNA to form the base of the stalk. L10 forms an elongated spine to which L12 dimers bind in a sequential fashion forming a multimeric L10(L12)X complex. One or more lysine residues are methylated.

Functionally, forms part of the ribosomal stalk which helps the ribosome interact with GTP-bound translation factors. The chain is Large ribosomal subunit protein uL11 from Francisella tularensis subsp. holarctica (strain OSU18).